The primary structure comprises 305 residues: Olfactory receptor 4B13 (305 aa).

Topologically, residues 1–25 (MANKNNVTELIFTGLFQDPEVQKVC) are extracellular. N-linked (GlcNAc...) asparagine glycosylation occurs at N6. Residues 26–46 (FVLFLPVYLATLLGNSLILVA) form a helical membrane-spanning segment. The Cytoplasmic portion of the chain corresponds to 47 to 55 (VSISKTLHS). A helical transmembrane segment spans residues 56–76 (PMYFFLSSLSLVEICYSSTIV). Topologically, residues 77–95 (PKFITDLLAKVKTISLKGC) are extracellular. A disulfide bridge connects residues C95 and C187. The chain crosses the membrane as a helical span at residues 96 to 116 (LTQIFFSHFFGVVEVILLVVM). At 117–141 (AYDRYVAICKPLHYMNIMSRQVCHM) the chain is on the cytoplasmic side. The helical transmembrane segment at 142 to 162 (LVAGSWLGGFIHSIIQIIITI) threads the bilayer. The Extracellular segment spans residues 163-202 (PLPFCGPNVIDHYFCDLQQLFKLACTDTFMEGFIVMANSG). A helical transmembrane segment spans residues 203–223 (LISIVSLFILVSSYAVILISL). Topologically, residues 224-236 (RKRSAEGRRKALS) are cytoplasmic. Residues 237 to 257 (TCASHITVVILFFVPGAFIYM) traverse the membrane as a helical segment. The Extracellular segment spans residues 258–266 (RPSSTFTED). Residues 267–287 (KLVSVFYTVITPMLNPIVYTL) traverse the membrane as a helical segment. Over 288–305 (RNTEMKNAIRMSWKQKDS) the chain is Cytoplasmic.

This sequence belongs to the G-protein coupled receptor 1 family.

The protein localises to the cell membrane. Odorant receptor. The chain is Olfactory receptor 4B13 from Mus musculus (Mouse).